The sequence spans 37 residues: Photosystem I reaction center subunit VIII (37 aa).

A helical membrane pass occupies residues 9–29 (SILVTLVGLVFPAFAMASLFL).

The protein belongs to the PsaI family.

It localises to the plastid. It is found in the chloroplast thylakoid membrane. Functionally, may help in the organization of the PsaL subunit. The polypeptide is Photosystem I reaction center subunit VIII (Pelargonium hortorum (Common geranium)).